The primary structure comprises 271 residues: Pyrroline-5-carboxylate reductase (271 aa).

It belongs to the pyrroline-5-carboxylate reductase family.

It is found in the cytoplasm. The catalysed reaction is L-proline + NADP(+) = (S)-1-pyrroline-5-carboxylate + NADPH + 2 H(+). It carries out the reaction L-proline + NAD(+) = (S)-1-pyrroline-5-carboxylate + NADH + 2 H(+). The protein operates within amino-acid biosynthesis; L-proline biosynthesis; L-proline from L-glutamate 5-semialdehyde: step 1/1. In terms of biological role, catalyzes the reduction of 1-pyrroline-5-carboxylate (PCA) to L-proline. The polypeptide is Pyrroline-5-carboxylate reductase (Staphylococcus aureus (strain COL)).